Consider the following 299-residue polypeptide: Oxygen-dependent coproporphyrinogen-III oxidase (299 aa).

Residue Ser-92 coordinates substrate. A divalent metal cation contacts are provided by His-96 and His-106. The active-site Proton donor is the His-106. Residue 108 to 110 participates in substrate binding; that stretch reads NVR. Positions 145 and 175 each coordinate a divalent metal cation. Positions 239 to 274 are important for dimerization; the sequence is YVEFNLVYDRGTLFGLQSGGRAESILMSLPPQVRWE. 257-259 provides a ligand contact to substrate; the sequence is GGR.

This sequence belongs to the aerobic coproporphyrinogen-III oxidase family. Homodimer. A divalent metal cation serves as cofactor.

The protein resides in the cytoplasm. It carries out the reaction coproporphyrinogen III + O2 + 2 H(+) = protoporphyrinogen IX + 2 CO2 + 2 H2O. It functions in the pathway porphyrin-containing compound metabolism; protoporphyrin-IX biosynthesis; protoporphyrinogen-IX from coproporphyrinogen-III (O2 route): step 1/1. Its function is as follows. Involved in the heme biosynthesis. Catalyzes the aerobic oxidative decarboxylation of propionate groups of rings A and B of coproporphyrinogen-III to yield the vinyl groups in protoporphyrinogen-IX. The protein is Oxygen-dependent coproporphyrinogen-III oxidase of Xanthomonas campestris pv. campestris (strain 8004).